The chain runs to 955 residues: Glycine dehydrogenase (decarboxylating) (955 aa).

Lysine 705 is subject to N6-(pyridoxal phosphate)lysine.

Belongs to the GcvP family. As to quaternary structure, the glycine cleavage system is composed of four proteins: P, T, L and H. It depends on pyridoxal 5'-phosphate as a cofactor.

It catalyses the reaction N(6)-[(R)-lipoyl]-L-lysyl-[glycine-cleavage complex H protein] + glycine + H(+) = N(6)-[(R)-S(8)-aminomethyldihydrolipoyl]-L-lysyl-[glycine-cleavage complex H protein] + CO2. The glycine cleavage system catalyzes the degradation of glycine. The P protein binds the alpha-amino group of glycine through its pyridoxal phosphate cofactor; CO(2) is released and the remaining methylamine moiety is then transferred to the lipoamide cofactor of the H protein. This chain is Glycine dehydrogenase (decarboxylating), found in Aliivibrio salmonicida (strain LFI1238) (Vibrio salmonicida (strain LFI1238)).